A 387-amino-acid chain; its full sequence is Ferrochelatase (387 aa).

The tract at residues 1-318 is ferrochelatase; the sequence is MGRVGVLLLN…VFIDALAQMV (318 aa). The Fe cation site is built by histidine 196 and glutamate 277. Positions 319–387 are hlip domain; that stretch reads MDSLNDPPCT…QGPLHFVGLL (69 aa).

In the N-terminal section; belongs to the ferrochelatase family. The protein in the C-terminal section; belongs to the Hlip family.

Its subcellular location is the cytoplasm. The enzyme catalyses heme b + 2 H(+) = protoporphyrin IX + Fe(2+). The protein operates within porphyrin-containing compound metabolism; protoheme biosynthesis; protoheme from protoporphyrin-IX: step 1/1. Functionally, catalyzes the ferrous insertion into protoporphyrin IX. Its function is as follows. The Hlip proteins might regulate tetrapyrrole biosynthesis, maybe at the level of aminolevulinic acid synthesis. Deletion of 4 to 5 members of the Hlip family (always including this member) suggests the proteins are involved in regulation of chlorophyll biosynthesis, in stabilization of chlorophyll-binding proteins and/or in reuse of chlorophylls, and may regulate tetrapyrrole biosynthesis. The Hlip proteins probably stabilize PSII assembly intermediates. In Synechocystis sp. (strain ATCC 27184 / PCC 6803 / Kazusa), this protein is Ferrochelatase.